A 379-amino-acid polypeptide reads, in one-letter code: Transaminase htyB (379 aa).

Arginine 92 provides a ligand contact to pyridoxal 5'-phosphate. The residue at position 203 (lysine 203) is an N6-(pyridoxal phosphate)lysine. A pyridoxal 5'-phosphate-binding site is contributed by glutamate 239.

The protein belongs to the class-IV pyridoxal-phosphate-dependent aminotransferase family. It depends on pyridoxal 5'-phosphate as a cofactor.

Its pathway is antifungal biosynthesis. In terms of biological role, transaminase; part of the gene cluster that mediates the de novo generation of L-homotyrosine from acetyl-CoA and 4-hydroxyphenyl-pyruvate. L-homotyrosine is a building block of echinocandin B, a fungal lipidated cyclic hexapeptide that acts as an antifungal agent. L-homotyrosine 4-hydroxyphenyl-pyruvate first undergoes an aldol-type condensation by htyA with the C-2 of acetyl-CoA followed by the release of CoA to form 2-(4-hydroxybenzyl)-malate. This is followed by isomerization of 2-(4-hydroxy-benzyl)-malate to 3-(4-hydroxybenzyl)-malate by htyD. Thereafter, 3-(4-hydroxybenzyl)-malate undergoes decarboxylation and oxidation to form 2-oxo-4-(4-hydroxybenzyl)butanoic acid, coupled to reduction of NAD(+) to NADH by htyC. The product then undergoes transamination catalyzed by htyB to form L-homotyrosine. This Aspergillus rugulosus (Emericella rugulosa) protein is Transaminase htyB.